A 479-amino-acid chain; its full sequence is Glycogen synthase (479 aa).

Lys15 contacts ADP-alpha-D-glucose.

Belongs to the glycosyltransferase 1 family. Bacterial/plant glycogen synthase subfamily.

The enzyme catalyses [(1-&gt;4)-alpha-D-glucosyl](n) + ADP-alpha-D-glucose = [(1-&gt;4)-alpha-D-glucosyl](n+1) + ADP + H(+). The protein operates within glycan biosynthesis; glycogen biosynthesis. In terms of biological role, synthesizes alpha-1,4-glucan chains using ADP-glucose. The protein is Glycogen synthase of Pectobacterium atrosepticum (strain SCRI 1043 / ATCC BAA-672) (Erwinia carotovora subsp. atroseptica).